A 546-amino-acid polypeptide reads, in one-letter code: Chaperonin GroEL 1 (546 aa).

ATP is bound by residues 30-33, lysine 51, 87-91, glycine 415, 479-481, and aspartate 495; these read TLGP, DGTTT, and NAA. Positions 526–546 are disordered; the sequence is KEDAPMPGGMPGGMGGMGMDM. A compositionally biased stretch (gly residues) spans 534-546; the sequence is GMPGGMGGMGMDM.

This sequence belongs to the chaperonin (HSP60) family. Forms a cylinder of 14 subunits composed of two heptameric rings stacked back-to-back. Interacts with the co-chaperonin GroES.

It is found in the cytoplasm. The enzyme catalyses ATP + H2O + a folded polypeptide = ADP + phosphate + an unfolded polypeptide.. Functionally, together with its co-chaperonin GroES, plays an essential role in assisting protein folding. The GroEL-GroES system forms a nano-cage that allows encapsulation of the non-native substrate proteins and provides a physical environment optimized to promote and accelerate protein folding. In Burkholderia pseudomallei (strain K96243), this protein is Chaperonin GroEL 1.